The sequence spans 199 residues: Recombination protein RecR (199 aa).

A C4-type zinc finger spans residues 58–73 (CSVCFTLSDTPVCAIC). In terms of domain architecture, Toprim spans 81–176 (SLLCVVEGPT…TVTRIASGMP (96 aa)).

This sequence belongs to the RecR family.

Functionally, may play a role in DNA repair. It seems to be involved in an RecBC-independent recombinational process of DNA repair. It may act with RecF and RecO. The protein is Recombination protein RecR of Desulfosudis oleivorans (strain DSM 6200 / JCM 39069 / Hxd3) (Desulfococcus oleovorans).